Consider the following 251-residue polypeptide: Flagellar brake protein YcgR (251 aa).

A PilZ domain is found at 127–239 (QRRDGFRVRP…ASRTLQRYID (113 aa)).

Belongs to the YcgR family. As to quaternary structure, monomer. Interacts with the flagellar basal bodies.

The protein localises to the bacterial flagellum basal body. Acts as a flagellar brake, regulating swimming and swarming in a bis-(3'-5') cyclic diguanylic acid (c-di-GMP)-dependent manner. Binds 1 c-di-GMP dimer per subunit. Increasing levels of c-di-GMP lead to decreased motility. The chain is Flagellar brake protein YcgR from Leptothrix cholodnii (strain ATCC 51168 / LMG 8142 / SP-6) (Leptothrix discophora (strain SP-6)).